Reading from the N-terminus, the 252-residue chain is Transcription factor bHLH117 (252 aa).

The tract at residues 103–141 is disordered; sequence LFPSLSPPLPAAKRQKLNSTSSSTTSGSPTASNDGGIIT. Residues 121 to 134 show a composition bias toward low complexity; sequence STSSSTTSGSPTAS. Positions 130–179 constitute a bHLH domain; sequence SPTASNDGGIITKRRKISDKIRSLEKLMPWERKMNLAMTLEESHKYIKFL.

Homodimer.

The protein resides in the nucleus. This chain is Transcription factor bHLH117 (BHLH117), found in Arabidopsis thaliana (Mouse-ear cress).